A 582-amino-acid polypeptide reads, in one-letter code: 5-aminolevulinate synthase, erythroid-specific, mitochondrial (582 aa).

Residues 1–44 (MLLQRCPVLIRSPTAILGKMIKTHQFLIGIGRCPILATQGTTCS) constitute a mitochondrion transit peptide. Arginine 158 contributes to the succinyl-CoA binding site. The pyridoxal 5'-phosphate site is built by cysteine 253 and phenylalanine 254. Succinyl-CoA-binding residues include serine 275 and lysine 294. Serine 327, histidine 355, and threonine 383 together coordinate pyridoxal 5'-phosphate. The active site involves lysine 386. Lysine 386 is subject to N6-(pyridoxal phosphate)lysine. The pyridoxal 5'-phosphate site is built by threonine 415 and threonine 416. Threonine 503 lines the succinyl-CoA pocket.

The protein belongs to the class-II pyridoxal-phosphate-dependent aminotransferase family. Homodimer. Pyridoxal 5'-phosphate serves as cofactor.

It localises to the mitochondrion inner membrane. The catalysed reaction is succinyl-CoA + glycine + H(+) = 5-aminolevulinate + CO2 + CoA. It participates in porphyrin-containing compound metabolism; protoporphyrin-IX biosynthesis; 5-aminolevulinate from glycine: step 1/1. Its function is as follows. Catalyzes the pyridoxal 5'-phosphate (PLP)-dependent condensation of succinyl-CoA and glycine to form aminolevulinic acid (ALA), with CoA and CO2 as by-products. Contributes significantly to heme formation during erythropoiesis. The protein is 5-aminolevulinate synthase, erythroid-specific, mitochondrial (ALAS2) of Delphinapterus leucas (Beluga whale).